A 511-amino-acid polypeptide reads, in one-letter code: Exodeoxyribonuclease 7 large subunit (511 aa).

This sequence belongs to the XseA family. Heterooligomer composed of large and small subunits.

It localises to the cytoplasm. It carries out the reaction Exonucleolytic cleavage in either 5'- to 3'- or 3'- to 5'-direction to yield nucleoside 5'-phosphates.. Bidirectionally degrades single-stranded DNA into large acid-insoluble oligonucleotides, which are then degraded further into small acid-soluble oligonucleotides. This is Exodeoxyribonuclease 7 large subunit from Brucella melitensis biotype 1 (strain ATCC 23456 / CCUG 17765 / NCTC 10094 / 16M).